A 246-amino-acid chain; its full sequence is Ubiquinone biosynthesis O-methyltransferase (246 aa).

4 residues coordinate S-adenosyl-L-methionine: arginine 40, glycine 70, aspartate 91, and methionine 135.

This sequence belongs to the methyltransferase superfamily. UbiG/COQ3 family.

The enzyme catalyses a 3-demethylubiquinol + S-adenosyl-L-methionine = a ubiquinol + S-adenosyl-L-homocysteine + H(+). The catalysed reaction is a 3-(all-trans-polyprenyl)benzene-1,2-diol + S-adenosyl-L-methionine = a 2-methoxy-6-(all-trans-polyprenyl)phenol + S-adenosyl-L-homocysteine + H(+). It participates in cofactor biosynthesis; ubiquinone biosynthesis. Functionally, O-methyltransferase that catalyzes the 2 O-methylation steps in the ubiquinone biosynthetic pathway. This Colwellia psychrerythraea (strain 34H / ATCC BAA-681) (Vibrio psychroerythus) protein is Ubiquinone biosynthesis O-methyltransferase.